Reading from the N-terminus, the 329-residue chain is G-protein coupled bile acid receptor 1 (329 aa).

Topologically, residues Met1–Gly19 are extracellular. An N-linked (GlcNAc...) asparagine glycan is attached at Asn4. A helical transmembrane segment spans residues Leu20–Ala40. Over Gly41–Cys52 the chain is Cytoplasmic. Residues Phe53–Val73 form a helical membrane-spanning segment. The Extracellular portion of the chain corresponds to Leu74 to Cys85. Residues Cys85 and Cys155 are joined by a disulfide bond. A helical transmembrane segment spans residues Leu86–Val106. At His107–Arg125 the chain is on the cytoplasmic side. A helical transmembrane segment spans residues Leu126–Trp146. Topologically, residues Asn147–Tyr165 are extracellular. Residue Asn154 is glycosylated (N-linked (GlcNAc...) asparagine). Residues Leu166–Val186 form a helical membrane-spanning segment. Topologically, residues Arg187–Thr230 are cytoplasmic. The chain crosses the membrane as a helical span at residues Leu231–Phe251. The Extracellular segment spans residues Glu252–Thr261. A helical membrane pass occupies residues Leu262–Leu282. At Gly283–Asn329 the chain is on the cytoplasmic side. Residues Gly304–Asn329 form a disordered region. Residues Pro306–Asn329 are compositionally biased toward polar residues.

It belongs to the G-protein coupled receptor 1 family.

The protein localises to the cell membrane. In terms of biological role, receptor for bile acid. Bile acid-binding induces its internalization, activation of extracellular signal-regulated kinase and intracellular cAMP production. May be involved in the suppression of macrophage functions by bile acids. Involved in bile acid promoted GLP1R secretion. The polypeptide is G-protein coupled bile acid receptor 1 (GPBAR1) (Bos taurus (Bovine)).